Reading from the N-terminus, the 574-residue chain is Protein misato (574 aa).

Belongs to the misato family.

The protein localises to the mitochondrion. This chain is Protein misato (mst), found in Drosophila melanogaster (Fruit fly).